A 445-amino-acid chain; its full sequence is Dihydroorotate dehydrogenase (quinone), mitochondrial (445 aa).

Residues 1-16 (MNSGFPRILSKKLFTL) constitute a mitochondrion transit peptide. A helical membrane pass occupies residues 39–56 (LLKYTVGIAIGSFAGFYF). Residues 124–128 (AGLDK) and S148 each bind FMN. K128 contacts substrate. 173–177 (NRYGF) contributes to the substrate binding site. Residues N221 and N251 each contribute to the FMN site. 251 to 256 (NVSSPN) contacts substrate. The active-site Nucleophile is S254. Residues K302 and S330 each coordinate FMN. Position 331–332 (331–332 (NT)) interacts with substrate. FMN contacts are provided by residues G356, G386, and 407–408 (YT).

This sequence belongs to the dihydroorotate dehydrogenase family. Type 2 subfamily. The cofactor is FMN.

The protein localises to the mitochondrion inner membrane. It catalyses the reaction (S)-dihydroorotate + a quinone = orotate + a quinol. The protein operates within pyrimidine metabolism; UMP biosynthesis via de novo pathway; orotate from (S)-dihydroorotate (quinone route): step 1/1. Functionally, catalyzes the conversion of dihydroorotate to orotate with quinone as electron acceptor. This is Dihydroorotate dehydrogenase (quinone), mitochondrial (URA9) from Kluyveromyces lactis (strain ATCC 8585 / CBS 2359 / DSM 70799 / NBRC 1267 / NRRL Y-1140 / WM37) (Yeast).